Consider the following 288-residue polypeptide: Bifunctional protein FolD (288 aa).

Residues G165–S167, S190, and I231 contribute to the NADP(+) site.

This sequence belongs to the tetrahydrofolate dehydrogenase/cyclohydrolase family. As to quaternary structure, homodimer.

The catalysed reaction is (6R)-5,10-methylene-5,6,7,8-tetrahydrofolate + NADP(+) = (6R)-5,10-methenyltetrahydrofolate + NADPH. It carries out the reaction (6R)-5,10-methenyltetrahydrofolate + H2O = (6R)-10-formyltetrahydrofolate + H(+). Its pathway is one-carbon metabolism; tetrahydrofolate interconversion. Catalyzes the oxidation of 5,10-methylenetetrahydrofolate to 5,10-methenyltetrahydrofolate and then the hydrolysis of 5,10-methenyltetrahydrofolate to 10-formyltetrahydrofolate. The protein is Bifunctional protein FolD of Nitrosospira multiformis (strain ATCC 25196 / NCIMB 11849 / C 71).